Reading from the N-terminus, the 776-residue chain is DNA topoisomerase 1 (776 aa).

The 111-residue stretch at 1–111 (MKLVIVESPA…VKSDDFFKRV (111 aa)) folds into the Toprim domain. Mg(2+) is bound by residues Glu7 and Asp80. Residues 132–568 (DANLVNAQQA…FWSGFNHNIE (437 aa)) enclose the Topo IA-type catalytic domain. The segment at 166–171 (SAGRVQ) is interaction with DNA. Tyr304 (O-(5'-phospho-DNA)-tyrosine intermediate) is an active-site residue. The C4-type zinc-finger motif lies at 600–627 (CPSCKTGELSLKLGKFGAFLACSNYPEC).

The protein belongs to the type IA topoisomerase family. As to quaternary structure, monomer. The cofactor is Mg(2+).

The catalysed reaction is ATP-independent breakage of single-stranded DNA, followed by passage and rejoining.. Releases the supercoiling and torsional tension of DNA, which is introduced during the DNA replication and transcription, by transiently cleaving and rejoining one strand of the DNA duplex. Introduces a single-strand break via transesterification at a target site in duplex DNA. The scissile phosphodiester is attacked by the catalytic tyrosine of the enzyme, resulting in the formation of a DNA-(5'-phosphotyrosyl)-enzyme intermediate and the expulsion of a 3'-OH DNA strand. The free DNA strand then undergoes passage around the unbroken strand, thus removing DNA supercoils. Finally, in the religation step, the DNA 3'-OH attacks the covalent intermediate to expel the active-site tyrosine and restore the DNA phosphodiester backbone. The chain is DNA topoisomerase 1 from Rickettsia felis (strain ATCC VR-1525 / URRWXCal2) (Rickettsia azadi).